Here is a 397-residue protein sequence, read N- to C-terminus: Serpin B10 (397 aa).

A Nuclear localization signal motif is present at residues Lys74–Lys77.

Belongs to the serpin family. Ov-serpin subfamily.

It localises to the nucleus. It is found in the cytoplasm. In terms of biological role, protease inhibitor that may play a role in the regulation of protease activities during hematopoiesis and apoptosis induced by TNF. May regulate protease activities in the cytoplasm and in the nucleus. The sequence is that of Serpin B10 (SERPINB10) from Sorex araneus (Eurasian common shrew).